The chain runs to 378 residues: Chaperone protein DnaJ (378 aa).

Residues 5 to 70 (DYYESLGVAK…QKRAAYDQYG (66 aa)) form the J domain. The CR-type zinc-finger motif lies at 133–211 (GVTKEIRIPA…CHGHGRVEKS (79 aa)). Cys146, Cys149, Cys163, Cys166, Cys185, Cys188, Cys199, and Cys202 together coordinate Zn(2+). CXXCXGXG motif repeat units lie at residues 146 to 153 (CDVCHGNG), 163 to 170 (CPTCHGNG), 185 to 192 (CPHCHGRG), and 199 to 206 (CVKCHGHG).

Belongs to the DnaJ family. Homodimer. Zn(2+) is required as a cofactor.

The protein resides in the cytoplasm. Functionally, participates actively in the response to hyperosmotic and heat shock by preventing the aggregation of stress-denatured proteins and by disaggregating proteins, also in an autonomous, DnaK-independent fashion. Unfolded proteins bind initially to DnaJ; upon interaction with the DnaJ-bound protein, DnaK hydrolyzes its bound ATP, resulting in the formation of a stable complex. GrpE releases ADP from DnaK; ATP binding to DnaK triggers the release of the substrate protein, thus completing the reaction cycle. Several rounds of ATP-dependent interactions between DnaJ, DnaK and GrpE are required for fully efficient folding. Also involved, together with DnaK and GrpE, in the DNA replication of plasmids through activation of initiation proteins. The chain is Chaperone protein DnaJ from Pectobacterium carotovorum subsp. carotovorum (strain PC1).